An 82-amino-acid chain; its full sequence is MVTIRLARGGAKKRPFYQIVVTDSRNARDGRFIERIGFFNPIATGQAEGLRLDLDRIEHWVGQGATVSERVSALIKDAKKAA.

This sequence belongs to the bacterial ribosomal protein bS16 family.

This chain is Small ribosomal subunit protein bS16, found in Sodalis glossinidius (strain morsitans).